A 399-amino-acid chain; its full sequence is MSGNRGVVYLGSGKVEVQKIDYPKMQDPRGKKIEHGVILKVVSTNICGSDQHMVRGRTTAQVGLVLGHEITGEVIEKGRDVENLQIGDLVSVPFNVACGRCRSCKEMHTGVCLTVNPARAGGAYGYVDMGDWTGGQAEYLLVPYADFNLLKLPDRDKAMEKIRDLTCLSDILPTGYHGAVTAGVGPGSTVYVAGAGPVGLAAAASARLLGAAVVIVGDLNPARLAHAKAQGFEIADLSLDTPLHEQIAALLGEPEVDCAVDAVGFEARGHGHEGAKHEAPATVLNSLMQVTRVAGKIGIPGLYVTEDPGAVDAAAKIGSLSIRFGLGWAKSHSFHTGQTPVMKYNRALMQAIMWDRINIAEVVGVQVISLDDAPRGYGEFDAGVPKKFVIDPHKTFSAA.

Zn(2+) is bound at residue C47. The NAD(+) site is built by G48, S49, and H52. Zn(2+) is bound by residues H68, C98, C101, C104, C112, and D170. The NAD(+) site is built by V198, D218, R223, V263, R268, H270, P300, L302, G337, and T339.

The protein belongs to the zinc-containing alcohol dehydrogenase family. As to quaternary structure, homotetramer. Requires Zn(2+) as cofactor.

It catalyses the reaction formaldehyde + NAD(+) + H2O = formate + NADH + 2 H(+). It carries out the reaction acetaldehyde + NAD(+) + H2O = acetate + NADH + 2 H(+). The enzyme catalyses 2 formaldehyde + H2O = methanol + formate + H(+). With respect to regulation, inactivated by bipyridine and p-chloromercuribenzoate. Dehydrogenase that catalyzes the NAD(+)-dependent oxidation of formaldehyde and acetaldehyde, and, to a lesser extent, long-chain alcohols, but is inactive against propionaldehyde, butyraldehyde, methanol and ethanol. Can also catalyze the dismutation of a wide range of aldehydes such as formaldehyde. The chain is Glutathione-independent formaldehyde dehydrogenase from Pseudomonas putida (Arthrobacter siderocapsulatus).